Here is a 374-residue protein sequence, read N- to C-terminus: Ribosomal RNA large subunit methyltransferase G (374 aa).

Belongs to the methyltransferase superfamily. RlmG family.

It is found in the cytoplasm. It catalyses the reaction guanosine(1835) in 23S rRNA + S-adenosyl-L-methionine = N(2)-methylguanosine(1835) in 23S rRNA + S-adenosyl-L-homocysteine + H(+). Its function is as follows. Specifically methylates the guanine in position 1835 (m2G1835) of 23S rRNA. This Pseudomonas entomophila (strain L48) protein is Ribosomal RNA large subunit methyltransferase G.